A 72-amino-acid polypeptide reads, in one-letter code: Delta-actitoxin-Avd2b 1 (72 aa).

Residues Met-1–Ala-21 form the signal peptide. The propeptide occupies Asn-22–Gly-42. Intrachain disulfides connect Cys-47–Cys-62, Cys-48–Cys-56, and Cys-50–Cys-67.

It belongs to the sea anemone short toxin (type III) family.

It localises to the secreted. Its subcellular location is the nematocyst. Its function is as follows. Voltage-gated sodium channel (Nav) inhibitor. 1 uM completely inhibits insect voltage-gated sodium channel inactivation (DmNav1 from D.melanogaster). This Anemonia viridis (Snakelocks anemone) protein is Delta-actitoxin-Avd2b 1.